Reading from the N-terminus, the 264-residue chain is Thymidylate synthase (264 aa).

Arginine 21 contacts dUMP. Histidine 51 is a binding site for (6R)-5,10-methylene-5,6,7,8-tetrahydrofolate. 126–127 contacts dUMP; it reads RR. The active-site Nucleophile is cysteine 146. DUMP contacts are provided by residues 166-169, asparagine 177, and 207-209; these read RSVD and HLY. (6R)-5,10-methylene-5,6,7,8-tetrahydrofolate is bound at residue aspartate 169. Alanine 263 is a (6R)-5,10-methylene-5,6,7,8-tetrahydrofolate binding site.

This sequence belongs to the thymidylate synthase family. Bacterial-type ThyA subfamily. Homodimer.

Its subcellular location is the cytoplasm. The catalysed reaction is dUMP + (6R)-5,10-methylene-5,6,7,8-tetrahydrofolate = 7,8-dihydrofolate + dTMP. Its pathway is pyrimidine metabolism; dTTP biosynthesis. Its function is as follows. Catalyzes the reductive methylation of 2'-deoxyuridine-5'-monophosphate (dUMP) to 2'-deoxythymidine-5'-monophosphate (dTMP) while utilizing 5,10-methylenetetrahydrofolate (mTHF) as the methyl donor and reductant in the reaction, yielding dihydrofolate (DHF) as a by-product. This enzymatic reaction provides an intracellular de novo source of dTMP, an essential precursor for DNA biosynthesis. This is Thymidylate synthase from Geobacillus sp. (strain WCH70).